The following is a 590-amino-acid chain: Muscarinic acetylcholine receptor M3 (590 aa).

Topologically, residues 1–67 are extracellular; it reads MTLHNNNTTS…DPLGGHTIWQ (67 aa). N-linked (GlcNAc...) asparagine glycans are attached at residues asparagine 6, asparagine 7, asparagine 15, asparagine 41, asparagine 48, and asparagine 53. A helical transmembrane segment spans residues 68 to 91; sequence VVFIAFLTGILALVTIIGNILVIV. The Cytoplasmic segment spans residues 92–104; sequence AFKVNKQLKTVNN. The helical transmembrane segment at 105 to 130 threads the bilayer; the sequence is YFLLSLACADLIIGVISMNLFTTYII. The Extracellular portion of the chain corresponds to 131–142; it reads MNRWALGNLACD. An intrachain disulfide couples cysteine 141 to cysteine 221. A helical membrane pass occupies residues 143–164; the sequence is LWLSIDYVASNASVMNLLVISF. At 165–184 the chain is on the cytoplasmic side; sequence DRYFSITRPLTYRAKRTTKR. Residues 185–206 form a helical membrane-spanning segment; that stretch reads AGVMIGLAWVISFILWAPAILF. Residues 207–229 lie on the Extracellular side of the membrane; the sequence is WQYFVGKRTVPPGECFIQFLSEP. A helical transmembrane segment spans residues 230-252; it reads TITFGTAIAAFYMPVTIMTILYW. Residues 253–491 are Cytoplasmic-facing; sequence RIYKETEKRT…SLIKEKKAAQ (239 aa). Residues 275 to 281 carry the Basolateral sorting signal motif; sequence AEAENFV. Positions 324-357 are disordered; the sequence is AEQMDQDHSSSDSWNNNDAAASLENSASSDEEDI. Low complexity predominate over residues 334-345; sequence SDSWNNNDAAAS. Serine 385 is modified (phosphoserine). The chain crosses the membrane as a helical span at residues 492 to 514; the sequence is TLSAILLAFIITWTPYNIMVLVN. Residues 515-526 are Extracellular-facing; sequence TFCDSCIPKTYW. Residues cysteine 517 and cysteine 520 are joined by a disulfide bond. A helical transmembrane segment spans residues 527 to 546; sequence NLGYWLCYINSTVNPVCYAL. Residues 547–590 lie on the Cytoplasmic side of the membrane; sequence CNKTFRTTFKMLLLCQCDKRKRRKQQYQQRQSVIFHKRVPEQAL.

Belongs to the G-protein coupled receptor 1 family. Muscarinic acetylcholine receptor subfamily. CHRM3 sub-subfamily. Homodimer; the dimers can form tetramers. Interacts with NALCN. Interacts with TMEM147.

It localises to the cell membrane. The protein localises to the postsynaptic cell membrane. The protein resides in the basolateral cell membrane. It is found in the endoplasmic reticulum membrane. Its function is as follows. The muscarinic acetylcholine receptor mediates various cellular responses, including inhibition of adenylate cyclase, breakdown of phosphoinositides and modulation of potassium channels through the action of G proteins. Primary transducing effect is Pi turnover. The chain is Muscarinic acetylcholine receptor M3 (CHRM3) from Sus scrofa (Pig).